A 557-amino-acid chain; its full sequence is Glutamyl-tRNA(Gln) amidotransferase subunit B, mitochondrial (557 aa).

Residues 1 to 41 (MAAPMLRWGCRGRRWAFARVDGGSCHRRGAPTGSTSNQIRG) constitute a mitochondrion transit peptide. Residues 26–45 (HRRGAPTGSTSNQIRGESSV) are disordered. Over residues 32–45 (TGSTSNQIRGESSV) the composition is skewed to polar residues. The residue at position 529 (Lys-529) is an N6-succinyllysine.

Belongs to the GatB/GatE family. GatB subfamily. In terms of assembly, subunit of the heterotrimeric GatCAB amidotransferase (AdT) complex, composed of A (QRSL1), B (GATB) and C (GATC) subunits. As to expression, predominantly expressed in tissues characterized by high rates of oxidative phosphorylation (OxPhos), including muscle and heart.

It localises to the mitochondrion. It carries out the reaction L-glutamyl-tRNA(Gln) + L-glutamine + ATP + H2O = L-glutaminyl-tRNA(Gln) + L-glutamate + ADP + phosphate + H(+). Its function is as follows. Allows the formation of correctly charged Gln-tRNA(Gln) through the transamidation of misacylated Glu-tRNA(Gln) in the mitochondria. The reaction takes place in the presence of glutamine and ATP through an activated gamma-phospho-Glu-tRNA(Gln). This is Glutamyl-tRNA(Gln) amidotransferase subunit B, mitochondrial from Homo sapiens (Human).